Consider the following 368-residue polypeptide: S-adenosylmethionine decarboxylase proenzyme (368 aa).

Residues Glu-26 and Glu-29 contribute to the active site. Catalysis depends on Ser-83, which acts as the Schiff-base intermediate with substrate; via pyruvic acid. At Ser-83 the chain carries Pyruvic acid (Ser); by autocatalysis. The active-site Proton donor; for catalytic activity is the Cys-97. Active-site proton acceptor; for processing activity residues include Ser-246 and His-261.

This sequence belongs to the eukaryotic AdoMetDC family. As to quaternary structure, heterotetramer of two alpha and two beta chains. Pyruvate is required as a cofactor. In terms of processing, is synthesized initially as an inactive proenzyme. Formation of the active enzyme involves a self-maturation process in which the active site pyruvoyl group is generated from an internal serine residue via an autocatalytic post-translational modification. Two non-identical subunits are generated from the proenzyme in this reaction, and the pyruvate is formed at the N-terminus of the alpha chain, which is derived from the carboxyl end of the proenzyme. The post-translation cleavage follows an unusual pathway, termed non-hydrolytic serinolysis, in which the side chain hydroxyl group of the serine supplies its oxygen atom to form the C-terminus of the beta chain, while the remainder of the serine residue undergoes an oxidative deamination to produce ammonia and the pyruvoyl group blocking the N-terminus of the alpha chain.

It catalyses the reaction S-adenosyl-L-methionine + H(+) = S-adenosyl 3-(methylsulfanyl)propylamine + CO2. It participates in amine and polyamine biosynthesis; S-adenosylmethioninamine biosynthesis; S-adenosylmethioninamine from S-adenosyl-L-methionine: step 1/1. Functionally, essential for biosynthesis of the polyamines spermidine and spermine. Polyamines are essential for cell proliferation and are implicated in cellular processes, ranging from DNA replication to apoptosis. The sequence is that of S-adenosylmethionine decarboxylase proenzyme from Caenorhabditis elegans.